The primary structure comprises 325 residues: DNA repair and recombination protein RadA (325 aa).

107–114 (GEFGSGKT) lines the ATP pocket.

The protein belongs to the eukaryotic RecA-like protein family.

In terms of biological role, involved in DNA repair and in homologous recombination. Binds and assemble on single-stranded DNA to form a nucleoprotein filament. Hydrolyzes ATP in a ssDNA-dependent manner and promotes DNA strand exchange between homologous DNA molecules. This Methanosarcina barkeri (strain Fusaro / DSM 804) protein is DNA repair and recombination protein RadA.